Here is a 504-residue protein sequence, read N- to C-terminus: Maturase K (504 aa).

It belongs to the intron maturase 2 family. MatK subfamily.

Its subcellular location is the plastid. It localises to the chloroplast. Usually encoded in the trnK tRNA gene intron. Probably assists in splicing its own and other chloroplast group II introns. In Alliaria petiolata (Garlic mustard), this protein is Maturase K.